Reading from the N-terminus, the 45-residue chain is Caltrin-like protein 1 (45 aa).

A Kazal-like domain is found at 8–45; the sequence is DSDRPNCSRYVQHLYMCTKELDPVCGTDGHTYGNRSIF. Residues Asn-13 and Asn-41 are each glycosylated (N-linked (GlcNAc...) asparagine).

In terms of processing, glycosylated.

It is found in the secreted. Functionally, inhibits calcium transport into spermatozoa. The chain is Caltrin-like protein 1 from Cavia porcellus (Guinea pig).